Consider the following 292-residue polypeptide: MQWGRILTAMVTPFTADGKLDLDGARRLAAYLVDHGSDGLVVAGTTGESPTLTHEEKIALFREVKKAVGDRAAVIAGTGTNSTAASIELSREAEALGVDGLMLVVPYYNRPSQEGLYQHFKAIAAATTLPIILYNIPSRTGRNMDAATTLRLAEIKNIKAVKEASGDLDQATAILRQAPADFLVYSGDDSLTLPLMAVGGYGIISVVAHVAGEKMQAMVRAFTAGDVQGAAALHRELFPLFKALFITSNPVPVKEALQMLGLPAGPVRLPLVGATREEKEKIAAALKETGLL.

Residue Thr-46 participates in pyruvate binding. Residue Tyr-134 is the Proton donor/acceptor of the active site. The active-site Schiff-base intermediate with substrate is Lys-162. Ile-204 contributes to the pyruvate binding site.

It belongs to the DapA family. Homotetramer; dimer of dimers.

The protein localises to the cytoplasm. It catalyses the reaction L-aspartate 4-semialdehyde + pyruvate = (2S,4S)-4-hydroxy-2,3,4,5-tetrahydrodipicolinate + H2O + H(+). The protein operates within amino-acid biosynthesis; L-lysine biosynthesis via DAP pathway; (S)-tetrahydrodipicolinate from L-aspartate: step 3/4. Functionally, catalyzes the condensation of (S)-aspartate-beta-semialdehyde [(S)-ASA] and pyruvate to 4-hydroxy-tetrahydrodipicolinate (HTPA). This chain is 4-hydroxy-tetrahydrodipicolinate synthase, found in Moorella thermoacetica (strain ATCC 39073 / JCM 9320).